The sequence spans 309 residues: Potassium channel subfamily K member 16 (309 aa).

The Cytoplasmic portion of the chain corresponds to 1–13 (MPSAGLCSCWGGR). The chain crosses the membrane as a helical span at residues 14 to 34 (VLPLLLAYVCYLLLGATIFQL). Residues 98–116 (SFFFAGTVVTTIGYGNLAP) constitute an intramembrane region (pore-forming). Positions 108, 109, 110, and 111 each coordinate K(+). The interval 108–113 (TIGYGN) is selectivity filter 1. The helical transmembrane segment at 120 to 140 (AGQVFCVFYALLGIPLNVIFL) threads the bilayer. The Cytoplasmic segment spans residues 141–165 (NHLGTGLRAHLAAIERWEDRPRRSQ). The chain crosses the membrane as a helical span at residues 166 to 186 (VLQVLGLALFLTLGTLVILIF). An intramembrane region (pore-forming) is located at residues 202 to 221 (GFYFAFITLSTIGFGDYVVG). Threonine 212, isoleucine 213, glycine 214, and phenylalanine 215 together coordinate K(+). Residues 212 to 217 (TIGFGD) are selectivity filter 2. The chain crosses the membrane as a helical span at residues 238–258 (IWILLGLAWLALILPLGPLLL). The Cytoplasmic segment spans residues 259–309 (HRCCQLWLLSLRQGCGAKAAPGRRPRRGSTAARGVQVTPQDFPISKKGLGS).

Belongs to the two pore domain potassium channel (TC 1.A.1.8) family. Homodimer; disulfide-linked. Heterodimer with KCNK17 and KCNK5. In terms of tissue distribution, highly expressed in pancreas, in both endocrine (alpha, beta, gamma, delta, and epsilon) and exocrine (acinar and ductal) cells. Expressed in pacreatic beta-cells (at protein level). Expressed in pacreatic delta-cells (at protein level). Not detectable in the other tissues tested.

The protein localises to the endoplasmic reticulum membrane. The protein resides in the cell membrane. Its subcellular location is the mitochondrion inner membrane. The enzyme catalyses K(+)(in) = K(+)(out). The catalysed reaction is Rb(+)(in) = Rb(+)(out). It catalyses the reaction Cs(+)(in) = Cs(+)(out). With respect to regulation, the channel conductance is stimulated by extracellular alkaline pH. Inhibited by Ba(2+) ions, quinine, quinidine, chloroform and halothane. K(+) channel that conducts voltage-dependent outward rectifying currents upon membrane depolarization. Voltage sensing is coupled to K(+) electrochemical gradient in an 'ion flux gating' mode where outward but not inward ion flow opens the gate. Homo- and heterodimerizes to form functional channels with distinct regulatory and gating properties. In pancreatic islets, conducts K(+) countercurrents for Ca(2+) release from the endoplasmic reticulum (ER) and regulates the frequency and duration of cytosolic Ca(2+) oscillations coupled to secretion of pancreatic hormones. In pancreatic beta cells, drives ER Ca(2+) efflux, which in turn activates Ca(2+)-dependent plasma membrane K(+) slow currents and cytosolic Ca(2+) influx, overall contributing to synchronous cytosolic Ca(2+) oscillations. Limits glucose-induced cytosolic Ca(2+) oscillations coupled to second-phase INS secretion. Contributes to beta cell adaptation to acute inflammation by maintaining normal cytosolic Ca(2+) levels and INS secretion. May regulate beta cell mitochondrial Ca(2+) levels either indirectly via ER Ca(2+) efflux or directly by hyperpolarizing the mitochondrial membrane potential. Limits mitochondrial Ca(2+) oscillations and ATP production involved in glucose homeostasis upon metabolic stress. In pancreatic delta cells, limits Ca(2+)-induced Ca(2+)-release involved in somatostatin secretion and modulates islet paracrine signaling involved in glucagon secretion. Permeable to other monovalent cations such as Rb(+) and Cs(+). This chain is Potassium channel subfamily K member 16, found in Homo sapiens (Human).